Here is a 33-residue protein sequence, read N- to C-terminus: Gaegurin-1 (33 aa).

Cys27 and Cys33 are disulfide-bonded.

It belongs to the frog skin active peptide (FSAP) family. Brevinin subfamily. Monomer. In terms of tissue distribution, expressed by the skin glands.

The protein localises to the secreted. Its function is as follows. Has a non-hemolytic activity. Has a broad spectrum of activity against both Gram-positive and Gram-negative bacteria, fungi and protozoa. The protein is Gaegurin-1 (GGN1) of Glandirana rugosa (Japanese wrinkled frog).